A 236-amino-acid polypeptide reads, in one-letter code: 7-cyano-7-deazaguanine synthase (236 aa).

21–31 (LSGGLDSATVL) provides a ligand contact to ATP. Cys202, Cys212, Cys215, and Cys218 together coordinate Zn(2+).

Belongs to the QueC family. The cofactor is Zn(2+).

The catalysed reaction is 7-carboxy-7-deazaguanine + NH4(+) + ATP = 7-cyano-7-deazaguanine + ADP + phosphate + H2O + H(+). It participates in purine metabolism; 7-cyano-7-deazaguanine biosynthesis. In terms of biological role, catalyzes the ATP-dependent conversion of 7-carboxy-7-deazaguanine (CDG) to 7-cyano-7-deazaguanine (preQ(0)). This is 7-cyano-7-deazaguanine synthase from Frankia casuarinae (strain DSM 45818 / CECT 9043 / HFP020203 / CcI3).